We begin with the raw amino-acid sequence, 1550 residues long: Pentafunctional AROM polypeptide (1550 aa).

Residues 1–379 are 3-dehydroquinate synthase; that stretch reads MSIERVPILG…YQLKAHQVSK (379 aa). Residues 42-44, 80-83, 111-113, and Asp-116 each bind NAD(+); these read DTN, ENNK, and GGV. A 7-phospho-2-dehydro-3-deoxy-D-arabino-heptonate-binding site is contributed by Arg-127. Position 136-137 (136-137) interacts with NAD(+); sequence TT. Residues Asp-143 and Lys-149 each coordinate 7-phospho-2-dehydro-3-deoxy-D-arabino-heptonate. NAD(+) is bound at residue Lys-158. 7-phospho-2-dehydro-3-deoxy-D-arabino-heptonate is bound at residue Asn-159. NAD(+) is bound by residues 176–179 and Asn-187; that span reads FLET. Glu-191 is a Zn(2+) binding site. 7-phospho-2-dehydro-3-deoxy-D-arabino-heptonate contacts are provided by residues 191 to 194 and Lys-243; that span reads EVVK. The Proton acceptor; for 3-dehydroquinate synthase activity role is filled by Glu-253. Residues 257–261 and His-264 each bind 7-phospho-2-dehydro-3-deoxy-D-arabino-heptonate; that span reads RNLLN. Zn(2+) is bound at residue His-264. The active-site Proton acceptor; for 3-dehydroquinate synthase activity is the His-268. 7-phospho-2-dehydro-3-deoxy-D-arabino-heptonate-binding residues include His-280 and Lys-351. A Zn(2+)-binding site is contributed by His-280. Positions 392-837 are EPSP synthase; sequence VHPFTNPPKE…WDILHSKFKI (446 aa). The interval 857–1047 is shikimate kinase; the sequence is DKGVIVIGMR…VPTGRSTAVV (191 aa). 864–871 contributes to the ATP binding site; sequence GMRGTGKS. The interval 1048–1257 is 3-dehydroquinase; that stretch reads LTLPDLNNVA…NDDGLLTIGE (210 aa). Arg-1193 (schiff-base intermediate with substrate; for 3-dehydroquinate dehydratase activity) is an active-site residue. A shikimate dehydrogenase region spans residues 1270–1550; sequence AKKFWVIGSP…EIIHRAVVEE (281 aa).

In the N-terminal section; belongs to the sugar phosphate cyclases superfamily. Dehydroquinate synthase family. This sequence in the 2nd section; belongs to the EPSP synthase family. The protein in the 3rd section; belongs to the shikimate kinase family. It in the 4th section; belongs to the type-I 3-dehydroquinase family. In the C-terminal section; belongs to the shikimate dehydrogenase family. Homodimer. Zn(2+) is required as a cofactor.

Its subcellular location is the cytoplasm. The enzyme catalyses 7-phospho-2-dehydro-3-deoxy-D-arabino-heptonate = 3-dehydroquinate + phosphate. The catalysed reaction is 3-dehydroquinate = 3-dehydroshikimate + H2O. It catalyses the reaction shikimate + NADP(+) = 3-dehydroshikimate + NADPH + H(+). It carries out the reaction shikimate + ATP = 3-phosphoshikimate + ADP + H(+). The enzyme catalyses 3-phosphoshikimate + phosphoenolpyruvate = 5-O-(1-carboxyvinyl)-3-phosphoshikimate + phosphate. It functions in the pathway metabolic intermediate biosynthesis; chorismate biosynthesis; chorismate from D-erythrose 4-phosphate and phosphoenolpyruvate: step 2/7. Its pathway is metabolic intermediate biosynthesis; chorismate biosynthesis; chorismate from D-erythrose 4-phosphate and phosphoenolpyruvate: step 3/7. It participates in metabolic intermediate biosynthesis; chorismate biosynthesis; chorismate from D-erythrose 4-phosphate and phosphoenolpyruvate: step 4/7. The protein operates within metabolic intermediate biosynthesis; chorismate biosynthesis; chorismate from D-erythrose 4-phosphate and phosphoenolpyruvate: step 5/7. It functions in the pathway metabolic intermediate biosynthesis; chorismate biosynthesis; chorismate from D-erythrose 4-phosphate and phosphoenolpyruvate: step 6/7. In terms of biological role, the AROM polypeptide catalyzes 5 consecutive enzymatic reactions in prechorismate polyaromatic amino acid biosynthesis. The chain is Pentafunctional AROM polypeptide from Candida dubliniensis (strain CD36 / ATCC MYA-646 / CBS 7987 / NCPF 3949 / NRRL Y-17841) (Yeast).